Reading from the N-terminus, the 181-residue chain is MKQILDFIPLIIFFALYKMYDIYTATGALIIATAIQLVVTYALYKKVEKMQLITFIMVTVFGGMTIFLHDDNFIKWKVTIVYCVFAAGLIIAHILGKPVIKGMLGKEVTLPDDKWAKINHAWVLFFTVCAIANLYVAFEMPLDVWVNFKVFGLLGLTFLYTLFTGMYVYKHMPKEKKEEQE.

The next 5 helical transmembrane spans lie at 22-42 (IYTATGALIIATAIQLVVTYA), 50-70 (MQLITFIMVTVFGGMTIFLHD), 80-100 (IVYCVFAAGLIIAHILGKPVI), 122-142 (WVLFFTVCAIANLYVAFEMPL), and 148-168 (FKVFGLLGLTFLYTLFTGMYV).

The protein belongs to the YciB family.

It localises to the cell inner membrane. Plays a role in cell envelope biogenesis, maintenance of cell envelope integrity and membrane homeostasis. The polypeptide is Inner membrane-spanning protein YciB (Aliivibrio fischeri (strain MJ11) (Vibrio fischeri)).